Reading from the N-terminus, the 180-residue chain is Large ribosomal subunit protein uL5 (180 aa).

This sequence belongs to the universal ribosomal protein uL5 family. In terms of assembly, part of the 50S ribosomal subunit; part of the 5S rRNA/L5/L18/L25 subcomplex. Contacts the 5S rRNA and the P site tRNA. Forms a bridge to the 30S subunit in the 70S ribosome.

Its function is as follows. This is one of the proteins that bind and probably mediate the attachment of the 5S RNA into the large ribosomal subunit, where it forms part of the central protuberance. In the 70S ribosome it contacts protein S13 of the 30S subunit (bridge B1b), connecting the 2 subunits; this bridge is implicated in subunit movement. Contacts the P site tRNA; the 5S rRNA and some of its associated proteins might help stabilize positioning of ribosome-bound tRNAs. The polypeptide is Large ribosomal subunit protein uL5 (Streptococcus agalactiae serotype Ia (strain ATCC 27591 / A909 / CDC SS700)).